Consider the following 473-residue polypeptide: Siroheme synthase (473 aa).

A precorrin-2 dehydrogenase /sirohydrochlorin ferrochelatase region spans residues Met1 to Leu206. NAD(+)-binding positions include Thr22 to Val23 and Pro43 to Lys44. The uroporphyrinogen-III C-methyltransferase stretch occupies residues Gly223–Ala473. Pro232 provides a ligand contact to S-adenosyl-L-methionine. Asp255 (proton acceptor) is an active-site residue. The active-site Proton donor is the Lys277. S-adenosyl-L-methionine is bound by residues Gly308–Asp310, Ile313, Thr338–Ala339, Met390, and Gly419.

It in the N-terminal section; belongs to the precorrin-2 dehydrogenase / sirohydrochlorin ferrochelatase family. This sequence in the C-terminal section; belongs to the precorrin methyltransferase family.

The enzyme catalyses uroporphyrinogen III + 2 S-adenosyl-L-methionine = precorrin-2 + 2 S-adenosyl-L-homocysteine + H(+). It catalyses the reaction precorrin-2 + NAD(+) = sirohydrochlorin + NADH + 2 H(+). It carries out the reaction siroheme + 2 H(+) = sirohydrochlorin + Fe(2+). It participates in cofactor biosynthesis; adenosylcobalamin biosynthesis; precorrin-2 from uroporphyrinogen III: step 1/1. Its pathway is cofactor biosynthesis; adenosylcobalamin biosynthesis; sirohydrochlorin from precorrin-2: step 1/1. The protein operates within porphyrin-containing compound metabolism; siroheme biosynthesis; precorrin-2 from uroporphyrinogen III: step 1/1. It functions in the pathway porphyrin-containing compound metabolism; siroheme biosynthesis; siroheme from sirohydrochlorin: step 1/1. It participates in porphyrin-containing compound metabolism; siroheme biosynthesis; sirohydrochlorin from precorrin-2: step 1/1. Multifunctional enzyme that catalyzes the SAM-dependent methylations of uroporphyrinogen III at position C-2 and C-7 to form precorrin-2 via precorrin-1. Then it catalyzes the NAD-dependent ring dehydrogenation of precorrin-2 to yield sirohydrochlorin. Finally, it catalyzes the ferrochelation of sirohydrochlorin to yield siroheme. The protein is Siroheme synthase of Hydrogenovibrio crunogenus (strain DSM 25203 / XCL-2) (Thiomicrospira crunogena).